A 184-amino-acid chain; its full sequence is Ribose 1,5-bisphosphate phosphokinase PhnN (184 aa).

Residue 11–18 (GPSGAGKD) participates in ATP binding.

It belongs to the ribose 1,5-bisphosphokinase family.

The catalysed reaction is alpha-D-ribose 1,5-bisphosphate + ATP = 5-phospho-alpha-D-ribose 1-diphosphate + ADP. It participates in metabolic intermediate biosynthesis; 5-phospho-alpha-D-ribose 1-diphosphate biosynthesis; 5-phospho-alpha-D-ribose 1-diphosphate from D-ribose 5-phosphate (route II): step 3/3. Functionally, catalyzes the phosphorylation of ribose 1,5-bisphosphate to 5-phospho-D-ribosyl alpha-1-diphosphate (PRPP). This is Ribose 1,5-bisphosphate phosphokinase PhnN from Burkholderia pseudomallei (strain K96243).